Here is a 1418-residue protein sequence, read N- to C-terminus: Chromatin remodeling factor mit1 (1418 aa).

Positions 135–148 (DETASDSATSSSSD) are enriched in low complexity. Residues 135–156 (DETASDSATSSSSDTNKKVNRK) form a disordered region. A PHD-type zinc finger spans residues 212–271 (VCVCVKCHGREHRSSGKNFVYCDHCSNVYHYDCSPLPSLNKETRNYSQQNGFICPLCSKN). An RING-type; atypical zinc finger spans residues 215–269 (CVKCHGREHRSSGKNFVYCDHCSNVYHYDCSPLPSLNKETRNYSQQNGFICPLCS). Residues 568-738 (YLRWYTHHPC…FNLLQFLNPM (171 aa)) form the Helicase ATP-binding domain. 581–588 (DEMGLGKT) is an ATP binding site. Positions 875–1034 (ILRLLVPKLI…QNHNSEKDLE (160 aa)) constitute a Helicase C-terminal domain.

The protein belongs to the SNF2/RAD54 helicase family. Interacts with clr3.

It localises to the nucleus. Its subcellular location is the chromosome. It is found in the centromere. The protein localises to the telomere. Its function is as follows. Required for proper positioning of nucleosomes at heterochromatic loci and for transcriptional gene silencing (TGS) function of the Snf2/Hdac-containing repressor complex (SHREC). This is Chromatin remodeling factor mit1 (mit1) from Schizosaccharomyces pombe (strain 972 / ATCC 24843) (Fission yeast).